A 602-amino-acid polypeptide reads, in one-letter code: Leucine-rich repeat-containing protein 40 (602 aa).

Residues 1–26 (MSRHMRAPRFDPRAGFHAEGKDRGPS) are disordered. Residues 8–24 (PRFDPRAGFHAEGKDRG) are compositionally biased toward basic and acidic residues. The stretch at 35–58 (ARSSGQLNLAGRNLGEVPQCVWRI) is one LRR 1 repeat. Ser-71 carries the phosphoserine modification. LRR repeat units lie at residues 81–103 (QTDLTKLIISSNKLQSLSDDLRL), 104–126 (LPALTVLDIHDNQLTSLPSAIRE), 127–149 (LDNLQKLNVSHNKLKILPEEITS), 150–172 (LKNLRTLHLQHNELTCIPEGFEH), 174–195 (SCLEDLDLSSNRLATVPADFAL), 196–219 (LSSLLRLNLSSNQLKNLPAEISRM), 221–241 (RLKHLDCDANLLETVPPDVGS), 242–266 (MESLELLYLRRNKLRVLPEFPSCRQ), 268–287 (KELHLAENQIEKLGAEHLQH), 288–310 (LQAILVLDLRGNKLRSVPEEMAL), 311–334 (LQSLERLDLSNNDISSLPCSLGNL), 336–356 (LKFLALEGNPLRTIRREIIAK), 398–421 (IATLKLLDYSDKQATLIPDDLFDA), 424–447 (TTLITSINFSKNQLCEIPQRIVEL), 449–470 (EMVLDINLSFNKLSFISHELCL), 471–494 (LQKLTFLDLRNNFLSSLPEEMSSL), 496–517 (KLQTINLSFNRFKVFPEVLYRI), 519–540 (TLEAVLISNNQVGSVDPQKMKL), 541–564 (MENLNTLDLQNNDLLQIPPELGNC), and 566–587 (QLRTLLLDGNPFRVPRAAILMK).

The chain is Leucine-rich repeat-containing protein 40 (Lrrc40) from Mus musculus (Mouse).